The sequence spans 212 residues: Phosphatidylserine decarboxylase proenzyme (212 aa).

Ser182 (schiff-base intermediate with substrate; via pyruvic acid) is an active-site residue. The residue at position 182 (Ser182) is a Pyruvic acid (Ser); by autocatalysis.

Belongs to the phosphatidylserine decarboxylase family. PSD-A subfamily. In terms of assembly, heterodimer of a large membrane-associated beta subunit and a small pyruvoyl-containing alpha subunit. Pyruvate is required as a cofactor. In terms of processing, is synthesized initially as an inactive proenzyme. Formation of the active enzyme involves a self-maturation process in which the active site pyruvoyl group is generated from an internal serine residue via an autocatalytic post-translational modification. Two non-identical subunits are generated from the proenzyme in this reaction, and the pyruvate is formed at the N-terminus of the alpha chain, which is derived from the carboxyl end of the proenzyme. The post-translation cleavage follows an unusual pathway, termed non-hydrolytic serinolysis, in which the side chain hydroxyl group of the serine supplies its oxygen atom to form the C-terminus of the beta chain, while the remainder of the serine residue undergoes an oxidative deamination to produce ammonia and the pyruvoyl prosthetic group on the alpha chain.

The protein localises to the cell membrane. The enzyme catalyses a 1,2-diacyl-sn-glycero-3-phospho-L-serine + H(+) = a 1,2-diacyl-sn-glycero-3-phosphoethanolamine + CO2. It participates in phospholipid metabolism; phosphatidylethanolamine biosynthesis; phosphatidylethanolamine from CDP-diacylglycerol: step 2/2. Its function is as follows. Catalyzes the formation of phosphatidylethanolamine (PtdEtn) from phosphatidylserine (PtdSer). This chain is Phosphatidylserine decarboxylase proenzyme, found in Chlorobium phaeobacteroides (strain DSM 266 / SMG 266 / 2430).